The chain runs to 311 residues: Ribosomal RNA small subunit methyltransferase H (311 aa).

S-adenosyl-L-methionine contacts are provided by residues 39–41 (GGH), Asp59, Phe87, Asp102, and His109.

Belongs to the methyltransferase superfamily. RsmH family.

The protein localises to the cytoplasm. It carries out the reaction cytidine(1402) in 16S rRNA + S-adenosyl-L-methionine = N(4)-methylcytidine(1402) in 16S rRNA + S-adenosyl-L-homocysteine + H(+). Its function is as follows. Specifically methylates the N4 position of cytidine in position 1402 (C1402) of 16S rRNA. The chain is Ribosomal RNA small subunit methyltransferase H from Porphyromonas gingivalis (strain ATCC 33277 / DSM 20709 / CIP 103683 / JCM 12257 / NCTC 11834 / 2561).